Here is a 500-residue protein sequence, read N- to C-terminus: Perfringolysin O (500 aa).

The first 28 residues, 1–28 (MIRFKKTKLIASIAMALCLFSQPVISFS), serve as a signal peptide directing secretion. The next 4 beta stranded transmembrane spans lie at 189 to 202 (KSQI…NAKV), 209 to 218 (VDFNAVANNE), 287 to 296 (SKDVQAAFKA), and 304 to 316 (KNSQ…YENS). Positions 458 to 468 (ECTGLAWEWWR) match the Conserved undecapeptide motif. The short motif at 490-491 (TL) is the Cholesterol binding element.

This sequence belongs to the cholesterol-dependent cytolysin family. As to quaternary structure, homooligomeric pore complex of 35 to 50 subunits; when inserted in the host membrane.

It is found in the secreted. The protein localises to the host cell membrane. In terms of biological role, a cholesterol-dependent toxin that causes cytolysis by forming pores in cholesterol containing host membranes. After binding to target membranes, the protein assembles into a pre-pore complex. A conformation change leads to insertion in the host membrane and formation of an oligomeric pore complex. Cholesterol is required for binding to host cell membranes, membrane insertion and pore formation; cholesterol binding is mediated by a Thr-Leu pair in the C-terminus. Can be reversibly inactivated by oxidation. This is Perfringolysin O (pfo) from Clostridium perfringens (strain ATCC 13124 / DSM 756 / JCM 1290 / NCIMB 6125 / NCTC 8237 / Type A).